A 347-amino-acid polypeptide reads, in one-letter code: Spermidine/putrescine import ATP-binding protein PotA (347 aa).

An ABC transporter domain is found at 6–238 (LEIRNLSHYY…PKTKFVADFI (233 aa)). 40-47 (GPSGCGKT) is an ATP binding site.

The protein belongs to the ABC transporter superfamily. Spermidine/putrescine importer (TC 3.A.1.11.1) family. As to quaternary structure, the complex is composed of two ATP-binding proteins (PotA), two transmembrane proteins (PotB and PotC) and a solute-binding protein (PotD).

It is found in the cell inner membrane. It catalyses the reaction ATP + H2O + polyamine-[polyamine-binding protein]Side 1 = ADP + phosphate + polyamineSide 2 + [polyamine-binding protein]Side 1.. Part of the ABC transporter complex PotABCD involved in spermidine/putrescine import. Responsible for energy coupling to the transport system. The protein is Spermidine/putrescine import ATP-binding protein PotA of Borrelia garinii subsp. bavariensis (strain ATCC BAA-2496 / DSM 23469 / PBi) (Borreliella bavariensis).